Consider the following 147-residue polypeptide: Leghemoglobin 3 (147 aa).

Residues 2–147 form the Globin domain; the sequence is GFTAQQEALV…LATAIKKAMG (146 aa). Position 30 is a nitrated tyrosine (Tyr30). Ser45 is a heme b binding site. A Phosphoserine modification is found at Ser45. His61 serves as a coordination point for O2. The heme b site is built by Lys64, His93, and Lys96. Tyr135 carries the nitrated tyrosine modification.

This sequence belongs to the plant globin family. In terms of assembly, monomer. Post-translationally, nitrated in effective nodules and particularly in hypoxic conditions; this mechanism may play a protective role in the symbiosis by buffering toxic peroxynitrite NO(2)(-). Nitration level decrease during nodule senescence. In terms of processing, phosphorylation at Ser-45 disrupts the molecular environment of its porphyrin ring oxygen binding pocket, thus leading to a reduced oxygen consumption and to the delivery of oxygen O(2) to symbiosomes. In terms of tissue distribution, specifically and strongly expressed in root nodules and at low levels in seedlings.

The protein resides in the cytoplasm. Its subcellular location is the cytosol. It is found in the nucleus. Leghemoglobin that reversibly binds oxygen O(2) through a pentacoordinated heme iron. In root nodules, facilitates the diffusion of oxygen to the bacteroids while preventing the bacterial nitrogenase from being inactivated by buffering dioxygen, nitric oxide and carbon monoxide, and promoting the formation of reactive oxygen species (ROS, e.g. H(2)O(2)). This role is essential for symbiotic nitrogen fixation (SNF). The protein is Leghemoglobin 3 of Lotus japonicus (Lotus corniculatus var. japonicus).